We begin with the raw amino-acid sequence, 361 residues long: PTI1-like tyrosine-protein kinase At3g15890 (361 aa).

A Protein kinase domain is found at 39–328; the sequence is FNYDNKLGEG…ISELEANPLF (290 aa). Residues 45–53 and lysine 67 each bind ATP; that span reads LGEGRFGSV. The active-site Proton acceptor is the aspartate 165. 2 disordered regions span residues 195–219 and 323–361; these read TGDGATKAKSNNGYISPECDASGKE and EANPLFKNPYSSNENNREHVAEESSDVILEDKDHQQQQE. A compositionally biased stretch (basic and acidic residues) spans 351–361; sequence LEDKDHQQQQE.

This sequence belongs to the protein kinase superfamily. Tyr protein kinase family.

The catalysed reaction is L-tyrosyl-[protein] + ATP = O-phospho-L-tyrosyl-[protein] + ADP + H(+). The polypeptide is PTI1-like tyrosine-protein kinase At3g15890 (Arabidopsis thaliana (Mouse-ear cress)).